The chain runs to 636 residues: Outer spore wall assembly protein SHE10 (636 aa).

The first 23 residues, 1-23, serve as a signal peptide directing secretion; that stretch reads MRLVSKLLKALLVLLLAFGSVRY. Coiled coils occupy residues 433 to 460 and 551 to 584; these read RAHL…LFEE and KANL…TEFE. A disordered region spans residues 565–607; it reads QQREKEKAESASMKASTEFELSSSSFSSSSPSTASSCTASSTS. Low complexity predominate over residues 579–607; the sequence is ASTEFELSSSSFSSSSPSTASSCTASSTS.

Belongs to the SHE10 family. In terms of assembly, component of the mitochondria-localized RNase mitochondrial RNA-processing (RNase MRP) composed of one single RNA encoded by the NME1 gene and at least 31 proteins. Absent in the nucleus-localized RNase MRP (NuMRP).

Its subcellular location is the mitochondrion. Involved in spore wall assembly. May be a component of the mitochondrial RNase MRP (MtMRP), a ribonucleoprotein endoribonuclease involved in the cleaving RNA transcripts to generate primers for DNA replication in mitochondria. This is Outer spore wall assembly protein SHE10 from Kluyveromyces lactis (strain ATCC 8585 / CBS 2359 / DSM 70799 / NBRC 1267 / NRRL Y-1140 / WM37) (Yeast).